The following is a 330-amino-acid chain: 4-hydroxythreonine-4-phosphate dehydrogenase (330 aa).

Residue Thr133 coordinates substrate. Residues His161, His206, and His261 each contribute to the a divalent metal cation site. Substrate contacts are provided by Lys269, Asn278, and Arg287.

The protein belongs to the PdxA family. In terms of assembly, homodimer. It depends on Zn(2+) as a cofactor. Mg(2+) serves as cofactor. Requires Co(2+) as cofactor.

The protein resides in the cytoplasm. It catalyses the reaction 4-(phosphooxy)-L-threonine + NAD(+) = 3-amino-2-oxopropyl phosphate + CO2 + NADH. The protein operates within cofactor biosynthesis; pyridoxine 5'-phosphate biosynthesis; pyridoxine 5'-phosphate from D-erythrose 4-phosphate: step 4/5. Catalyzes the NAD(P)-dependent oxidation of 4-(phosphooxy)-L-threonine (HTP) into 2-amino-3-oxo-4-(phosphooxy)butyric acid which spontaneously decarboxylates to form 3-amino-2-oxopropyl phosphate (AHAP). The chain is 4-hydroxythreonine-4-phosphate dehydrogenase from Xylella fastidiosa (strain Temecula1 / ATCC 700964).